The following is a 631-amino-acid chain: Quinoprotein alcohol dehydrogenase PedE (631 aa).

The first 33 residues, 1–33 (MTIRSLPALSPLALSVRVLLMAGSLALGNVATA), serve as a signal peptide directing secretion. Ca(2+)-binding residues include Asp53, Thr56, and Asp59. Position 103 (Glu103) interacts with pyrroloquinoline quinone. Residues Cys147 and Cys148 are joined by a disulfide bond. Pyrroloquinoline quinone contacts are provided by residues Arg153, Thr197, and 215–217 (HGS). Residue Glu221 coordinates Ca(2+). Residues 250–286 (GRLNGKDSTPTGDVKAPSWPDDPTTETGKVEAWSHGG) form a disordered region. Positions 308 and 358 each coordinate Ca(2+). The active-site Proton acceptor is the Asp358. Arg386 provides a ligand contact to pyrroloquinoline quinone. Positions 421 to 443 (GRPVENPGQRPAKPLPGETKGKP) are disordered. Trp531 and Ala595 together coordinate pyrroloquinoline quinone.

Belongs to the bacterial PQQ dehydrogenase family. In terms of assembly, homodimer. Interacts with cytochrome c550. Pyrroloquinoline quinone serves as cofactor. Ca(2+) is required as a cofactor. Post-translationally, the disulfide ring formed between the two adjacent cysteine residues Cys-147 and Cys-148 is essential for efficient electron transfer at pH 7 from PedE to its natural electron acceptor cytochrome c550.

It localises to the periplasm. It catalyses the reaction a primary alcohol + 2 Fe(III)-[cytochrome c] = an aldehyde + 2 Fe(II)-[cytochrome c] + 2 H(+). The enzyme catalyses ethanol + 2 Fe(III)-[cytochrome c] = acetaldehyde + 2 Fe(II)-[cytochrome c] + 2 H(+). The catalysed reaction is butan-1-ol + 2 Fe(III)-[cytochrome c] = butanal + 2 Fe(II)-[cytochrome c] + 2 H(+). It carries out the reaction butan-2-ol + 2 Fe(III)-[cytochrome c] = butan-2-one + 2 Fe(II)-[cytochrome c] + 2 H(+). It catalyses the reaction 2-phenylethanol + 2 Fe(III)-[cytochrome c] = 2-phenylacetaldehyde + 2 Fe(II)-[cytochrome c] + 2 H(+). The enzyme catalyses octan-1-ol + 2 Fe(III)-[cytochrome c] = octanal + 2 Fe(II)-[cytochrome c] + 2 H(+). The catalysed reaction is hexan-1-ol + 2 Fe(III)-[cytochrome c] = hexanal + 2 Fe(II)-[cytochrome c] + 2 H(+). It carries out the reaction cinnamyl alcohol + 2 Fe(III)-[cytochrome c] = cinnamaldehyde + 2 Fe(II)-[cytochrome c] + 2 H(+). It catalyses the reaction farnesol + 2 Fe(III)-[cytochrome c] = farnesal + 2 Fe(II)-[cytochrome c] + 2 H(+). The enzyme catalyses an aldehyde + 2 Fe(III)-[cytochrome c] + H2O = a carboxylate + 2 Fe(II)-[cytochrome c] + 3 H(+). The catalysed reaction is acetaldehyde + 2 Fe(III)-[cytochrome c] + H2O = 2 Fe(II)-[cytochrome c] + acetate + 3 H(+). It carries out the reaction butanal + 2 Fe(III)-[cytochrome c] + H2O = butanoate + 2 Fe(II)-[cytochrome c] + 3 H(+). It catalyses the reaction hexanal + 2 Fe(III)-[cytochrome c] + H2O = hexanoate + 2 Fe(II)-[cytochrome c] + 3 H(+). The enzyme catalyses octanal + 2 Fe(III)-[cytochrome c] + H2O = octanoate + 2 Fe(II)-[cytochrome c] + 3 H(+). In terms of biological role, alcohol dehydrogenase that catalyzes the oxidation of a range of substrates, including linear and aromatic primary and secondary alcohols, as well as aldehydes, allowing bacterial growth with a variety of volatile organic compounds (VOCs) as carbon and energy sources. Uses a specific inducible cytochrome c550, encoded by the adjacent gene in the locus, as electron acceptor. In Pseudomonas putida (strain ATCC 47054 / DSM 6125 / CFBP 8728 / NCIMB 11950 / KT2440), this protein is Quinoprotein alcohol dehydrogenase PedE.